The primary structure comprises 410 residues: Metacaspase-1 (410 aa).

A disordered region spans residues M1–S94. 2 stretches are compositionally biased toward low complexity: residues A21–P47 and N55–P64. The span at Q65 to G75 shows a compositional bias: gly residues. A compositionally biased stretch (polar residues) spans M80–S94. Catalysis depends on residues H200 and C256.

Belongs to the peptidase C14B family.

In terms of biological role, involved in cell death (apoptosis). The chain is Metacaspase-1 (MCA1) from Meyerozyma guilliermondii (strain ATCC 6260 / CBS 566 / DSM 6381 / JCM 1539 / NBRC 10279 / NRRL Y-324) (Yeast).